Reading from the N-terminus, the 674-residue chain is Probable copper-transporting P-type ATPase B (674 aa).

Residues 1 to 22 (MNHSNQMHHDNHESHNHHSGHA) are disordered. Over residues 7-16 (MHHDNHESHN) the composition is skewed to basic and acidic residues. Helical transmembrane passes span 32–52 (FFVS…MGIN), 57–77 (FTFP…FFYG), 95–115 (GMMT…LYAF), 127–147 (TMDF…GHWI), 284–304 (GYLF…WMLI), and 315–335 (LVTV…PLVT). Asp-367 functions as the 4-aspartylphosphate intermediate in the catalytic mechanism. Residues Asp-565 and Asp-569 each contribute to the Mg(2+) site. 2 consecutive transmembrane segments (helical) span residues 623–645 (LWWG…AFVG) and 649–671 (SPAV…AFTL).

This sequence belongs to the cation transport ATPase (P-type) (TC 3.A.3) family. Type IB subfamily.

Its subcellular location is the cell membrane. It carries out the reaction Cu(+)(in) + ATP + H2O = Cu(+)(out) + ADP + phosphate + H(+). Functionally, involved in copper transport. This Staphylococcus epidermidis (strain ATCC 12228 / FDA PCI 1200) protein is Probable copper-transporting P-type ATPase B (copB).